The following is a 248-amino-acid chain: MWSHFGTALSFLTLFRLPFTSPRTLTPQELAESFSFFPLVGLILGFCYALPARVLSGVVPSLLLAVAITALTAVLTRALHLDGLADLADGVGGGYDPERRLEIMKDSRTGAFGALAIALAVAFKVAALDAVIRAGSFLPLLLVPVVSRLAMVLAAYRSPYARKEGGLGKPFLEHIARRHLLTALGLTAVSAFLVQPVFGLCALVLAAGTVPAFRLLCRRWLGGMTGDALGALNEIVEVLLLSAAACMY.

A run of 5 helical transmembrane segments spans residues 30–50, 54–74, 112–132, 134–154, and 188–208; these read LAES…CYAL, VLSG…LTAV, FGAL…DAVI, AGSF…MVLA, and AVSA…LAAG.

Belongs to the CobS family. Mg(2+) is required as a cofactor.

It localises to the cell inner membrane. The enzyme catalyses alpha-ribazole + adenosylcob(III)inamide-GDP = adenosylcob(III)alamin + GMP + H(+). It carries out the reaction alpha-ribazole 5'-phosphate + adenosylcob(III)inamide-GDP = adenosylcob(III)alamin 5'-phosphate + GMP + H(+). It functions in the pathway cofactor biosynthesis; adenosylcobalamin biosynthesis; adenosylcobalamin from cob(II)yrinate a,c-diamide: step 7/7. Its function is as follows. Joins adenosylcobinamide-GDP and alpha-ribazole to generate adenosylcobalamin (Ado-cobalamin). Also synthesizes adenosylcobalamin 5'-phosphate from adenosylcobinamide-GDP and alpha-ribazole 5'-phosphate. The sequence is that of Adenosylcobinamide-GDP ribazoletransferase from Syntrophobacter fumaroxidans (strain DSM 10017 / MPOB).